The sequence spans 192 residues: uncharacterized protein (192 aa).

A coiled-coil region spans residues 53-111; sequence CLKESVERARKVYLSLLKDYERKSREYEKAYENYLKELRTYRETLYRIKEDLKFYERIC.

This is an uncharacterized protein from Aquifex aeolicus (strain VF5).